A 195-amino-acid polypeptide reads, in one-letter code: uncharacterized protein (195 aa).

The chain crosses the membrane as a helical span at residues I175 to G195.

It localises to the membrane. This is an uncharacterized protein from Methanocaldococcus jannaschii (strain ATCC 43067 / DSM 2661 / JAL-1 / JCM 10045 / NBRC 100440) (Methanococcus jannaschii).